The sequence spans 283 residues: Nucleotide-binding protein ACIAD3059 (283 aa).

9–16 is a binding site for ATP; it reads GQSGSGKS. 59–62 is a binding site for GTP; it reads DVRS.

Belongs to the RapZ-like family.

Functionally, displays ATPase and GTPase activities. The chain is Nucleotide-binding protein ACIAD3059 from Acinetobacter baylyi (strain ATCC 33305 / BD413 / ADP1).